A 111-amino-acid polypeptide reads, in one-letter code: Nucleoid-associated protein Cpar_0834 (111 aa).

Belongs to the YbaB/EbfC family. In terms of assembly, homodimer.

The protein localises to the cytoplasm. It is found in the nucleoid. Functionally, binds to DNA and alters its conformation. May be involved in regulation of gene expression, nucleoid organization and DNA protection. The chain is Nucleoid-associated protein Cpar_0834 from Chlorobaculum parvum (strain DSM 263 / NCIMB 8327) (Chlorobium vibrioforme subsp. thiosulfatophilum).